The following is a 207-amino-acid chain: ATP-dependent dethiobiotin synthetase BioD (207 aa).

Residue 13–18 (EVGKTV) coordinates ATP. Thr-17 contributes to the Mg(2+) binding site. Residue Lys-33 is part of the active site. ATP contacts are provided by residues Asp-44 and 100 to 103 (EGAG). Mg(2+) contacts are provided by Asp-44 and Glu-100.

This sequence belongs to the dethiobiotin synthetase family. In terms of assembly, homodimer. Requires Mg(2+) as cofactor.

The protein localises to the cytoplasm. The enzyme catalyses (7R,8S)-7,8-diammoniononanoate + CO2 + ATP = (4R,5S)-dethiobiotin + ADP + phosphate + 3 H(+). It functions in the pathway cofactor biosynthesis; biotin biosynthesis; biotin from 7,8-diaminononanoate: step 1/2. Its function is as follows. Catalyzes a mechanistically unusual reaction, the ATP-dependent insertion of CO2 between the N7 and N8 nitrogen atoms of 7,8-diaminopelargonic acid (DAPA, also called 7,8-diammoniononanoate) to form a ureido ring. This chain is ATP-dependent dethiobiotin synthetase BioD, found in Christiangramia forsetii (strain DSM 17595 / CGMCC 1.15422 / KT0803) (Gramella forsetii).